Here is a 356-residue protein sequence, read N- to C-terminus: Thiamine thiazole synthase, chloroplastic (356 aa).

The transit peptide at 1–51 directs the protein to the chloroplast; the sequence is MAAMASTAFAPSVSSTTNKLFDSSFHGAPMSPSLLRLQPIKSSRPNNLSIS. Substrate-binding positions include alanine 101, 121–122, glycine 129, and alanine 194; that span reads EQ. Cysteine 223 is subject to 2,3-didehydroalanine (Cys). Residues aspartate 225, histidine 240, methionine 292, and 302–304 each bind substrate; that span reads RMG.

It belongs to the THI4 family. In terms of assembly, homooctamer. The cofactor is Fe cation. In terms of processing, during the catalytic reaction, a sulfide is transferred from Cys-223 to a reaction intermediate, generating a dehydroalanine residue.

The protein resides in the plastid. It is found in the chloroplast. The catalysed reaction is [ADP-thiazole synthase]-L-cysteine + glycine + NAD(+) = [ADP-thiazole synthase]-dehydroalanine + ADP-5-ethyl-4-methylthiazole-2-carboxylate + nicotinamide + 3 H2O + 2 H(+). Functionally, involved in biosynthesis of the thiamine precursor thiazole. Catalyzes the conversion of NAD and glycine to adenosine diphosphate 5-(2-hydroxyethyl)-4-methylthiazole-2-carboxylic acid (ADT), an adenylated thiazole intermediate. The reaction includes an iron-dependent sulfide transfer from a conserved cysteine residue of the protein to a thiazole intermediate. The enzyme can only undergo a single turnover, which suggests it is a suicide enzyme. May have additional roles in adaptation to various stress conditions and in DNA damage tolerance. In Citrus sinensis (Sweet orange), this protein is Thiamine thiazole synthase, chloroplastic.